The primary structure comprises 892 residues: Alanine--tRNA ligase (892 aa).

Residues histidine 574, histidine 578, cysteine 677, and histidine 681 each coordinate Zn(2+).

It belongs to the class-II aminoacyl-tRNA synthetase family. It depends on Zn(2+) as a cofactor.

It is found in the cytoplasm. It carries out the reaction tRNA(Ala) + L-alanine + ATP = L-alanyl-tRNA(Ala) + AMP + diphosphate. Catalyzes the attachment of alanine to tRNA(Ala) in a two-step reaction: alanine is first activated by ATP to form Ala-AMP and then transferred to the acceptor end of tRNA(Ala). Also edits incorrectly charged Ser-tRNA(Ala) and Gly-tRNA(Ala) via its editing domain. This chain is Alanine--tRNA ligase, found in Mesoplasma florum (strain ATCC 33453 / NBRC 100688 / NCTC 11704 / L1) (Acholeplasma florum).